Consider the following 339-residue polypeptide: MMPFCHNIINISCVKNNWSNDVRASLYSLMVLIILTTLVGNLIVIVSISHFKELHTPTNWLIHSMATVDFLPGCLVMPYSMVRSAEHCWYFGEVFCKIHTSTDIMLSSASIFHLSFISIDRYYAVCDPLRYKAKINILVICVMIFISWSVPAVFAFGMIFLELNFKGAEEIYYKHVHCRGGCSVFFSKISGVLTFMTSFYIPGSIMLCVYYRIYLIAKEQARLINDANQKLQIGLEMKNGISQSKERKAVKTLGIVMGVFLICWCPFFICTVMDPFLHYIIPPTLNDVLIWFGYLNSTFNPMVYAFFYPWFRKALKMMLFGKIFQKDSSRCKLFLELSS.

The Extracellular portion of the chain corresponds to 1–25; that stretch reads MMPFCHNIINISCVKNNWSNDVRAS. 3 disulfide bridges follow: Cys-5–Cys-178, Cys-13–Cys-88, and Cys-96–Cys-182. Asn-10 and Asn-17 each carry an N-linked (GlcNAc...) asparagine glycan. A helical transmembrane segment spans residues 26–46; it reads LYSLMVLIILTTLVGNLIVIV. Topologically, residues 47–59 are cytoplasmic; the sequence is SISHFKELHTPTN. A helical transmembrane segment spans residues 60–80; the sequence is WLIHSMATVDFLPGCLVMPYS. Residues 81–98 are Extracellular-facing; the sequence is MVRSAEHCWYFGEVFCKI. A helical membrane pass occupies residues 99 to 119; that stretch reads HTSTDIMLSSASIFHLSFISI. Residue Asp-103 participates in 2-phenylethylamine binding. The Cytoplasmic segment spans residues 120–136; it reads DRYYAVCDPLRYKAKIN. Residues 137-157 form a helical membrane-spanning segment; that stretch reads ILVICVMIFISWSVPAVFAFG. Topologically, residues 158 to 188 are extracellular; sequence MIFLELNFKGAEEIYYKHVHCRGGCSVFFSK. A helical transmembrane segment spans residues 189 to 209; that stretch reads ISGVLTFMTSFYIPGSIMLCV. The Cytoplasmic portion of the chain corresponds to 210–252; sequence YYRIYLIAKEQARLINDANQKLQIGLEMKNGISQSKERKAVKT. Residues 253-273 form a helical membrane-spanning segment; sequence LGIVMGVFLICWCPFFICTVM. The Extracellular segment spans residues 274–287; it reads DPFLHYIIPPTLND. Residues 288-308 traverse the membrane as a helical segment; that stretch reads VLIWFGYLNSTFNPMVYAFFY. Residues 309–339 are Cytoplasmic-facing; that stretch reads PWFRKALKMMLFGKIFQKDSSRCKLFLELSS.

The protein belongs to the G-protein coupled receptor 1 family.

Its subcellular location is the endomembrane system. The protein localises to the endoplasmic reticulum membrane. It localises to the cell membrane. Functionally, intracellular G-protein coupled receptor for trace amines, which recognizes endogenous amine-containing metabolites such as beta-phenylethylamine (beta-PEA), 3-iodothyronamine (T1AM), isoamylamine (IAA), cadaverine (CAD), cyclohexylamine (CHA), p-tyramine (p-TYR), trimethylamine (TMA), octopamine and tryptamine. Also functions as a receptor for various drugs and psychoactive substances, such as amphetamine and methamphetamine. Unresponsive to classical biogenic amines, such as epinephrine and histamine and only partially activated by dopamine and serotonin. Expressed in both the central and peripheral nervous system: TAAR1 activation regulates the activity of several neurotransmitter signaling pathways by (1) decreasing the basal firing rates of the neurons involved and by (2) lowering the sensitivity of receptors to neurotransmitters. Ligand binding causes a conformation change that triggers signaling via guanine nucleotide-binding proteins (G proteins) and modulates the activity of downstream effectors. TAAR1 is coupled with different G(i)/G(o)-, G(s)- or G(q)/G(11) classes of G alpha proteins depending on the ligand. CAD-binding is coupled to G(i)/G(o) G alpha proteins and mediates inhibition of adenylate cyclase activity. T1AM- or beta-PEA-binding is coupled to G(s) G alpha proteins and mediates activation of adenylate cyclase activity. CHA- or IAA-binding is coupled to G(q)/G(11) G alpha proteins and activates phospholipase C-beta, releasing diacylglycerol (DAG) and inositol 1,4,5-trisphosphate (IP3) second messengers. TMA-binding is coupled with all three G(i)/G(o)-, G(s)- or G(q)/G(11) G alpha protein subtypes. The sequence is that of Trace amine-associated receptor 1 (TAAR1) from Pan troglodytes (Chimpanzee).